Consider the following 174-residue polypeptide: Bifunctional protein PyrR 2 (174 aa).

Residues 39 to 40 (TR), 100 to 108 (DDVLFTGRT), and Arg-133 each bind substrate. Residues 96 to 108 (VILVDDVLFTGRT) carry the PRPP-binding motif.

Belongs to the purine/pyrimidine phosphoribosyltransferase family. PyrR subfamily. In terms of assembly, homodimer and homohexamer; in equilibrium.

It carries out the reaction UMP + diphosphate = 5-phospho-alpha-D-ribose 1-diphosphate + uracil. Its function is as follows. Regulates transcriptional attenuation of the pyrimidine nucleotide (pyr) operon by binding in a uridine-dependent manner to specific sites on pyr mRNA. This disrupts an antiterminator hairpin in the RNA and favors formation of a downstream transcription terminator, leading to a reduced expression of downstream genes. In terms of biological role, also displays a weak uracil phosphoribosyltransferase activity which is not physiologically significant. The protein is Bifunctional protein PyrR 2 (pyrR2) of Lactiplantibacillus plantarum (strain ATCC BAA-793 / NCIMB 8826 / WCFS1) (Lactobacillus plantarum).